The following is a 396-amino-acid chain: Tyrosine--tRNA ligase (396 aa).

A 'HIGH' region motif is present at residues 42 to 51; it reads PTAPDIHLGH. A 'KMSKS' region motif is present at residues 226 to 230; it reads KMSKS. Lys-229 is an ATP binding site. Residues 334-395 form the S4 RNA-binding domain; that stretch reads LPIANLLKEA…GKRKFAKIII (62 aa).

The protein belongs to the class-I aminoacyl-tRNA synthetase family. TyrS type 2 subfamily. As to quaternary structure, homodimer.

It localises to the cytoplasm. The catalysed reaction is tRNA(Tyr) + L-tyrosine + ATP = L-tyrosyl-tRNA(Tyr) + AMP + diphosphate + H(+). Catalyzes the attachment of tyrosine to tRNA(Tyr) in a two-step reaction: tyrosine is first activated by ATP to form Tyr-AMP and then transferred to the acceptor end of tRNA(Tyr). The polypeptide is Tyrosine--tRNA ligase (Francisella tularensis subsp. tularensis (strain SCHU S4 / Schu 4)).